The primary structure comprises 1183 residues: Polyphosphatidylinositol phosphatase INP52 (1183 aa).

Over residues 133-153 the composition is skewed to low complexity; sequence PPSISTHSSRSSLRSSSSRSL. A disordered region spans residues 133–161; sequence PPSISTHSSRSSLRSSSSRSLNAQEQAPK. Position 152 is a phosphoserine (Ser-152). An SAC domain is found at 167–507; that stretch reads LRKLLSNGSF…GDQISQIYTG (341 aa). Residue Ser-522 is modified to Phosphoserine. Residues 955-968 are compositionally biased toward low complexity; the sequence is SPLLSGPSPQPSVV. The disordered stretch occupies residues 955-1183; that stretch reads SPLLSGPSPQ…VHPLKPCDPN (229 aa). Ser-1005 and Ser-1016 each carry phosphoserine. Thr-1032 is subject to Phosphothreonine. Polar residues-rich tracts occupy residues 1046 to 1057, 1082 to 1100, and 1130 to 1145; these read KPVSLQKSSSEL, STAPDEISTSTKNSGVSTT, and KLNTSQEHSIKVSPSN. Ser-1095 is subject to Phosphoserine.

This sequence belongs to the synaptojanin family. It in the central section; belongs to the inositol 1,4,5-trisphosphate 5-phosphatase family. As to quaternary structure, interacts (via SAC domain) with BSP1; the interaction is direct. Interacts with ABP1.

It is found in the cytoplasm. The protein resides in the cytoskeleton. It localises to the actin patch. The catalysed reaction is a 1,2-diacyl-sn-glycero-3-phospho-(1D-myo-inositol-4,5-bisphosphate) + H2O = a 1,2-diacyl-sn-glycero-3-phospho-(1D-myo-inositol 4-phosphate) + phosphate. In terms of biological role, dephosphorylates a number of phosphatidylinositols (PIs) like phosphatidylinositol 4,5-bisphosphate (PtdIns(4,5)P2), but also phosphatidylinositol 3-phosphate (PtdIns(3)P), phosphatidylinositol 4-phosphate (PtdIns(4)P), and phosphatidylinositol 3,5-bisphosphate (PtdIns(3,5)P2). Controls the cellular levels and subcellular distribution of phosphatidylinositol 3-phosphate and phosphatidylinositol 4,5-bisphosphate. Specifically functions within the early endocytic pathway and actin organization. The sequence is that of Polyphosphatidylinositol phosphatase INP52 from Saccharomyces cerevisiae (strain ATCC 204508 / S288c) (Baker's yeast).